The chain runs to 320 residues: Cytochrome f (320 aa).

The N-terminal stretch at methionine 1–alanine 35 is a signal peptide. Tyrosine 36, cysteine 56, cysteine 59, and histidine 60 together coordinate heme. Residues valine 286 to lysine 306 traverse the membrane as a helical segment.

It belongs to the cytochrome f family. As to quaternary structure, the 4 large subunits of the cytochrome b6-f complex are cytochrome b6, subunit IV (17 kDa polypeptide, petD), cytochrome f and the Rieske protein, while the 4 small subunits are PetG, PetL, PetM and PetN. The complex functions as a dimer. Heme is required as a cofactor.

Its subcellular location is the plastid. It localises to the chloroplast thylakoid membrane. Functionally, component of the cytochrome b6-f complex, which mediates electron transfer between photosystem II (PSII) and photosystem I (PSI), cyclic electron flow around PSI, and state transitions. The polypeptide is Cytochrome f (Citrus sinensis (Sweet orange)).